We begin with the raw amino-acid sequence, 415 residues long: Branched-chain-amino-acid aminotransferase, cytosolic (415 aa).

Lys-244 carries the post-translational modification N6-(pyridoxal phosphate)lysine.

This sequence belongs to the class-IV pyridoxal-phosphate-dependent aminotransferase family. Requires pyridoxal 5'-phosphate as cofactor.

It localises to the cytoplasm. The catalysed reaction is L-leucine + 2-oxoglutarate = 4-methyl-2-oxopentanoate + L-glutamate. It carries out the reaction L-isoleucine + 2-oxoglutarate = (S)-3-methyl-2-oxopentanoate + L-glutamate. It catalyses the reaction L-valine + 2-oxoglutarate = 3-methyl-2-oxobutanoate + L-glutamate. Catalyzes the first reaction in the catabolism of the essential branched chain amino acids leucine, isoleucine, and valine. The protein is Branched-chain-amino-acid aminotransferase, cytosolic (bcat-1) of Caenorhabditis elegans.